The chain runs to 439 residues: Trigger factor (439 aa).

Residues 170 to 255 (GDTVVIDFDG…IHELKKLETP (86 aa)) enclose the PPIase FKBP-type domain.

Belongs to the FKBP-type PPIase family. Tig subfamily.

It is found in the cytoplasm. The enzyme catalyses [protein]-peptidylproline (omega=180) = [protein]-peptidylproline (omega=0). In terms of biological role, involved in protein export. Acts as a chaperone by maintaining the newly synthesized protein in an open conformation. Functions as a peptidyl-prolyl cis-trans isomerase. This chain is Trigger factor, found in Oenococcus oeni (strain ATCC BAA-331 / PSU-1).